A 533-amino-acid chain; its full sequence is Probable polyamine oxidase 5 (533 aa).

Residues Glu-37, Arg-45, Val-262, and Glu-501 each contribute to the FAD site.

It belongs to the flavin monoamine oxidase family. FAD serves as cofactor. Expressed in root vasculature, leaves and stems.

It is found in the cytoplasm. The enzyme catalyses spermine + O2 + H2O = 3-aminopropanal + spermidine + H2O2. It catalyses the reaction N(1)-acetylspermine + O2 + H2O = 3-acetamidopropanal + spermidine + H2O2. It carries out the reaction norspermine + O2 + H2O = norspermidine + 3-aminopropanal + H2O2. The catalysed reaction is thermospermine + O2 + H2O = 3-aminopropanal + spermidine + H2O2. It functions in the pathway amine and polyamine degradation; spermine degradation. Functionally, flavoenzyme involved in polyamine back-conversion. Catalyzes the oxidation of the secondary amino group of polyamines, such as spermine and its acetyl derivatives. Substrate preference is spermine &gt; N(1)-acetylspermine &gt; thermospermine &gt; norspermine. Plays an important role in the regulation of polyamine intracellular concentration. Involved in xylem differentiation by controlling thermospermine homeostasis, and participating in the tightly controlled interplay between auxin and cytokinin that is necessary for proper xylem differentiation. Involved in the production of hydrogen peroxide in response to salt and cold stresses. In Arabidopsis thaliana (Mouse-ear cress), this protein is Probable polyamine oxidase 5.